A 464-amino-acid chain; its full sequence is Siroheme synthase (464 aa).

A precorrin-2 dehydrogenase /sirohydrochlorin ferrochelatase region spans residues 1-203 (MDYLPLFHKL…GQGAEAERLL (203 aa)). Residues 22–23 (EI) and 43–44 (PE) contribute to the NAD(+) site. Serine 128 is subject to Phosphoserine. A uroporphyrinogen-III C-methyltransferase region spans residues 216-464 (GEVYLVGAGP…AWFEGSQQDQ (249 aa)). Proline 225 is a binding site for S-adenosyl-L-methionine. The active-site Proton acceptor is the aspartate 248. The active-site Proton donor is the lysine 270. S-adenosyl-L-methionine-binding positions include 301–303 (GGD), isoleucine 306, 331–332 (TA), methionine 383, and glycine 412.

This sequence in the N-terminal section; belongs to the precorrin-2 dehydrogenase / sirohydrochlorin ferrochelatase family. It in the C-terminal section; belongs to the precorrin methyltransferase family.

The enzyme catalyses uroporphyrinogen III + 2 S-adenosyl-L-methionine = precorrin-2 + 2 S-adenosyl-L-homocysteine + H(+). It catalyses the reaction precorrin-2 + NAD(+) = sirohydrochlorin + NADH + 2 H(+). It carries out the reaction siroheme + 2 H(+) = sirohydrochlorin + Fe(2+). It participates in cofactor biosynthesis; adenosylcobalamin biosynthesis; precorrin-2 from uroporphyrinogen III: step 1/1. Its pathway is cofactor biosynthesis; adenosylcobalamin biosynthesis; sirohydrochlorin from precorrin-2: step 1/1. The protein operates within porphyrin-containing compound metabolism; siroheme biosynthesis; precorrin-2 from uroporphyrinogen III: step 1/1. It functions in the pathway porphyrin-containing compound metabolism; siroheme biosynthesis; siroheme from sirohydrochlorin: step 1/1. It participates in porphyrin-containing compound metabolism; siroheme biosynthesis; sirohydrochlorin from precorrin-2: step 1/1. Its function is as follows. Multifunctional enzyme that catalyzes the SAM-dependent methylations of uroporphyrinogen III at position C-2 and C-7 to form precorrin-2 via precorrin-1. Then it catalyzes the NAD-dependent ring dehydrogenation of precorrin-2 to yield sirohydrochlorin. Finally, it catalyzes the ferrochelation of sirohydrochlorin to yield siroheme. This chain is Siroheme synthase, found in Pseudomonas putida (strain W619).